Reading from the N-terminus, the 326-residue chain is Lipopolysaccharide heptosyltransferase 1 (326 aa).

Threonine 187, threonine 188, lysine 192, glutamate 222, and methionine 242 together coordinate ADP. ADP-L-glycero-beta-D-manno-heptose contacts are provided by threonine 187, threonine 188, lysine 192, glutamate 222, methionine 242, aspartate 261, threonine 262, glycine 263, and histidine 266. Residues threonine 262 and glycine 263 each coordinate ADP.

The protein belongs to the glycosyltransferase 9 family. In terms of assembly, monomer.

Its subcellular location is the cell inner membrane. The enzyme catalyses an alpha-Kdo-(2-&gt;4)-alpha-Kdo-(2-&gt;6)-lipid A + ADP-L-glycero-beta-D-manno-heptose = an L-alpha-D-Hep-(1-&gt;5)-[alpha-Kdo-(2-&gt;4)]-alpha-Kdo-(2-&gt;6)-lipid A + ADP + H(+). The catalysed reaction is alpha-Kdo-(2-&gt;4)-alpha-Kdo-(2-&gt;6)-lipid A (E. coli) + ADP-L-glycero-beta-D-manno-heptose = L-alpha-D-Hep-(1-&gt;5)-[alpha-Kdo-(2-&gt;4)]-alpha-Kdo-(2-&gt;6)-lipid A (E. coli) + ADP + H(+). It participates in bacterial outer membrane biogenesis; LPS core biosynthesis. With respect to regulation, inhibited by ADP-L-glycero-beta-D-gluco-2-deoxy-2-fluoro-heptose (ADP-2F-heptose), a non-cleavable analog of the substrate ADP-L-glycero-beta-D-manno-heptose. In terms of biological role, glycosyltransferase involved in the biosynthesis of the core oligosaccharide region of lipopolysaccharide (LPS). Catalyzes the addition of the first heptose unit to one 3-deoxy-D-manno-octulosonic acid (Kdo) residue of the Kdo2-lipid A module. In Escherichia coli O18:K1:H7 (strain RS218 / NMEC), this protein is Lipopolysaccharide heptosyltransferase 1.